Here is a 423-residue protein sequence, read N- to C-terminus: D-tagatose-1,6-bisphosphate aldolase subunit GatZ (423 aa).

It belongs to the GatZ/KbaZ family. GatZ subfamily. In terms of assembly, forms a complex with GatY.

It participates in carbohydrate metabolism; D-tagatose 6-phosphate degradation; D-glyceraldehyde 3-phosphate and glycerone phosphate from D-tagatose 6-phosphate: step 2/2. In terms of biological role, component of the tagatose-1,6-bisphosphate aldolase GatYZ that is required for full activity and stability of the Y subunit. Could have a chaperone-like function for the proper and stable folding of GatY. When expressed alone, GatZ does not show any aldolase activity. Is involved in the catabolism of galactitol. This chain is D-tagatose-1,6-bisphosphate aldolase subunit GatZ, found in Salmonella agona (strain SL483).